A 908-amino-acid polypeptide reads, in one-letter code: Protein translocase subunit SecA (908 aa).

Residues Gln87, 105–109 (GEGKT), and Asp513 contribute to the ATP site. The span at 852-863 (ARRAQAQHATAE) shows a compositional bias: low complexity. The tract at residues 852-908 (ARRAQAQHATAENQLADDEAEAASPQTVVRDERKVGRNEPCPCGSGKKYKQCHGKID) is disordered. Positions 892, 894, 903, and 904 each coordinate Zn(2+). A compositionally biased stretch (basic residues) spans 898 to 908 (KKYKQCHGKID).

It belongs to the SecA family. As to quaternary structure, monomer and homodimer. Part of the essential Sec protein translocation apparatus which comprises SecA, SecYEG and auxiliary proteins SecDF-YajC and YidC. It depends on Zn(2+) as a cofactor.

It localises to the cell inner membrane. It is found in the cytoplasm. The enzyme catalyses ATP + H2O + cellular proteinSide 1 = ADP + phosphate + cellular proteinSide 2.. Part of the Sec protein translocase complex. Interacts with the SecYEG preprotein conducting channel. Has a central role in coupling the hydrolysis of ATP to the transfer of proteins into and across the cell membrane, serving both as a receptor for the preprotein-SecB complex and as an ATP-driven molecular motor driving the stepwise translocation of polypeptide chains across the membrane. The polypeptide is Protein translocase subunit SecA (Vibrio atlanticus (strain LGP32) (Vibrio splendidus (strain Mel32))).